An 89-amino-acid chain; its full sequence is Small ribosomal subunit protein uS15 (89 aa).

It belongs to the universal ribosomal protein uS15 family. As to quaternary structure, part of the 30S ribosomal subunit. Forms a bridge to the 50S subunit in the 70S ribosome, contacting the 23S rRNA.

Its function is as follows. One of the primary rRNA binding proteins, it binds directly to 16S rRNA where it helps nucleate assembly of the platform of the 30S subunit by binding and bridging several RNA helices of the 16S rRNA. In terms of biological role, forms an intersubunit bridge (bridge B4) with the 23S rRNA of the 50S subunit in the ribosome. This chain is Small ribosomal subunit protein uS15, found in Nitratiruptor sp. (strain SB155-2).